The sequence spans 411 residues: Corticotropin-releasing factor receptor 2 (411 aa).

Positions 1-19 form a signal peptide, not cleaved; it reads MDAALLLSLLEANCSLALA. At 1–108 the chain is on the extracellular side; the sequence is MDAALLLSLL…EPILDDKQRK (108 aa). N-linked (GlcNAc...) asparagine glycosylation is found at Asn-13, Asn-41, Asn-74, Asn-86, and Asn-94. 3 cysteine pairs are disulfide-bonded: Cys-14/Cys-50, Cys-40/Cys-83, and Cys-64/Cys-98. The helical transmembrane segment at 109 to 139 threads the bilayer; it reads YDLHYRIALIINYLGHCVSVVALVAAFLLFL. Over 140 to 146 the chain is Cytoplasmic; that stretch reads VLRSIRC. A helical membrane pass occupies residues 147–171; the sequence is LRNVIHWNLITTFILRNITWFLLQL. Topologically, residues 172 to 185 are extracellular; it reads IDHEVHEGNEVWCR. Cys-184 and Cys-254 are oxidised to a cystine. The helical transmembrane segment at 186-214 threads the bilayer; it reads CVTTIFNYFVVTNFFWMFVEGCYLHTAIV. Over 215 to 221 the chain is Cytoplasmic; that stretch reads MTYSTEH. The helical transmembrane segment at 222–249 threads the bilayer; the sequence is LRKWLFLFIGWCIPCPIIVAWAVGKLYY. The Extracellular portion of the chain corresponds to 250-265; the sequence is ENEQCWFGKEPGDLVD. The helical transmembrane segment at 266 to 291 threads the bilayer; that stretch reads YIYQGPIILVLLINFVFLFNIVRILM. At 292-302 the chain is on the cytoplasmic side; the sequence is TKLRASTTSET. Residues 303–327 form a helical membrane-spanning segment; that stretch reads IQYRKAVKATLVLLPLLGITYMLFF. The Extracellular segment spans residues 328–334; the sequence is VNPGEDD. Residues 335-364 traverse the membrane as a helical segment; it reads LSQIVFIYFNSFLQSFQGFFVSVFYCFFNG. Over 365–411 the chain is Cytoplasmic; that stretch reads EVRSALRKRWHRWQDHHALRVPVARAMSIPTSPTRISFHSIKQTAAV.

It belongs to the G-protein coupled receptor 2 family. As to quaternary structure, monomer. Interacts (via N-terminal extracellular domain) with CRF, UCN, UCN2 and UCN3. Post-translationally, a N-glycosylation site within the signal peptide impedes its proper cleavage and function. In terms of tissue distribution, predominantly expressed in limbic regions of the brain such as the lateral septum, the entorhinal cortex, the hypothalamic ventromedial nucleus and several amygdaloid nuclei. Also detectable in lung, kidney and heart.

The protein localises to the cell membrane. Its function is as follows. G-protein coupled receptor for CRH (corticotropin-releasing factor), UCN (urocortin), UCN2 and UCN3. Has high affinity for UCN. Ligand binding causes a conformation change that triggers signaling via guanine nucleotide-binding proteins (G proteins) and down-stream effectors, such as adenylate cyclase. Promotes the activation of adenylate cyclase, leading to increased intracellular cAMP levels. The polypeptide is Corticotropin-releasing factor receptor 2 (Crhr2) (Rattus norvegicus (Rat)).